Consider the following 1400-residue polypeptide: DNA-directed RNA polymerase subunit beta' (1400 aa).

Zn(2+)-binding residues include Cys71, Cys73, Cys86, and Cys89. Mg(2+) is bound by residues Asp462, Asp464, and Asp466. Cys811, Cys885, Cys892, and Cys895 together coordinate Zn(2+).

The protein belongs to the RNA polymerase beta' chain family. The RNAP catalytic core consists of 2 alpha, 1 beta, 1 beta' and 1 omega subunit. When a sigma factor is associated with the core the holoenzyme is formed, which can initiate transcription. It depends on Mg(2+) as a cofactor. Zn(2+) serves as cofactor.

It carries out the reaction RNA(n) + a ribonucleoside 5'-triphosphate = RNA(n+1) + diphosphate. Its function is as follows. DNA-dependent RNA polymerase catalyzes the transcription of DNA into RNA using the four ribonucleoside triphosphates as substrates. This Brucella anthropi (strain ATCC 49188 / DSM 6882 / CCUG 24695 / JCM 21032 / LMG 3331 / NBRC 15819 / NCTC 12168 / Alc 37) (Ochrobactrum anthropi) protein is DNA-directed RNA polymerase subunit beta'.